The sequence spans 334 residues: Glyoxylate reductase (334 aa).

NADP(+) contacts are provided by residues 158–161 (FGRI), 180–182 (SRT), and 239–241 (IAR). Catalysis depends on residues Arg-241 and Glu-270. The active-site Proton donor is His-288. 288 to 290 (HIG) serves as a coordination point for NADP(+).

It belongs to the D-isomer specific 2-hydroxyacid dehydrogenase family. GyaR subfamily. As to quaternary structure, homodimer.

Its subcellular location is the cytoplasm. It carries out the reaction glycolate + NAD(+) = glyoxylate + NADH + H(+). The sequence is that of Glyoxylate reductase from Thermococcus gammatolerans (strain DSM 15229 / JCM 11827 / EJ3).